The following is a 910-amino-acid chain: MAEGVVLFGVHKLWELLNRESARLNGIGEQVDGLKRQLGRLQSLLKDADAKKHESERVRNFLEDVRDIVYDAEDIIESFLLNEFRAKEKGIKKHARRLACFLVDRRKFDSDIKGITKKISEVIGGMKSLGIQEIIDGASSMSLQERQREQKEIRQTFANSSESDLVGVEQSVEALAGHLVENDNIQVVSISGMGGIGKTTLARQVFHHDMVQRHFDGFAWVFVSQQFAQKHVWQRIWQELQPQNGDISHMDEHILQGKLFKLLETGRYLVVLDDVWKEEDWDRIKAVFPRKRGWKMLLTSRNEGVGIHADPKSFGFKTRILTPEESWKLCEKIVFHRRDETGTLSEVRVDEDMEAMGKEMVTCCGGLPLAVKVLGGLLATKHTVPEWKRVYDNIGPHLAGRSSLDDNLNSIYRVLSLSYEDLPMCLKHCFLYLAHFPEYYEIHVKRLFNYLAAEGIITSSDDGTTIQDKGEDYLEELARRNMITIDKNYMFLRKKHCQMHDMMREVCLSKAKEENFLEIFKVSTATSAINARSLSKSSRLSVHGGNALQSLGQTINKKVRSLLYFAFEDEFCILESTTPCFRSLPLLRVLDLSRVKFEGGKLPSSIGDLIHLRFLSLHRAWISHLPSSLRNLKLLLYLNLGFNGMVHVPNVLKEMQELRYLQLPMSMHDKTKLELSDLVNLESLMNFSTKYASVMDLLHMTKLRELSLFITDGSSDTLSSSLGQLRSLEVLHLYDRQEPRVAYHGGEIVLNCIHLKELELAIHMPRFPDQYLFHPHLSHIYLWCCSMEEDPIPILERLLHLKSVILTFGAFVGRRMVCSKGGFPQLCFLKLEELEELEEWIVEEGSMPLLRALTICNCRKLKLPGGINYITSLKELTIVGMKWKEKLVPGGEDYYKVQNIPNVQFINCDE.

A coiled-coil region spans residues 22–60 (ARLNGIGEQVDGLKRQLGRLQSLLKDADAKKHESERVRN). The region spanning 169–461 (EQSVEALAGH…AAEGIITSSD (293 aa)) is the NB-ARC domain. LRR repeat units follow at residues 584–609 (LPLLRVLDLSRVKFEGGKLPSSIGDL), 610–632 (IHLRFLSLHRAWISHLPSSLRNL), and 634–655 (LLLYLNLGFNGMVHVPNVLKEM).

Belongs to the disease resistance NB-LRR family. RPP8/HRT subfamily.

This is Inactive disease susceptibility protein LOV1 (LOV1) from Arabidopsis thaliana (Mouse-ear cress).